We begin with the raw amino-acid sequence, 341 residues long: Arfaptin-2 (341 aa).

The disordered stretch occupies residues 46-84 (NETSIVSGGYGGSGDGLIPTGSGRHPSHSTSPSGPGDEV). Positions 65–81 (TGSGRHPSHSTSPSGPG) are enriched in low complexity. Ser-72 bears the Phosphoserine mark. The AH domain occupies 121-321 (TVDLELELQI…NQKQLEQTLQ (201 aa)).

Forms homodimers or heterodimers with ARFIP1. Interacts with RAC1. Specifically binds to GTP-bound ARF1 and ARF6, but binds to RAC1.GTP and RAC1.GDP with similar affinities. Interacts with ARL1. Interacts (via N-terminus) with IKBKB and IKBKG; these interactions inhibit activation of NF-kappa-B.

The protein resides in the golgi apparatus. It localises to the trans-Golgi network membrane. In terms of biological role, plays a role in constitutive metalloproteinase (MMP) secretion from the trans Golgi network. May have important functions during vesicle biogenesis at certain cargo subdomains, which could be predominantly utilized by secreted MMPs, such as MMP7 and MMP2. Also involved in autophagy by regulating the starvation-dependent trafficking of ATG9A vesicles which deliver the phosphatidylinositol 4-kinase beta (PI4KB) to the autophagosome initiation site. Involved in phagophore growth during mitophagy by regulating ATG9A trafficking to mitochondria. In addition, plays a role in NF-kappa-B inhibition by interacting with IKBKB and IKBKG. The polypeptide is Arfaptin-2 (Mus musculus (Mouse)).